Reading from the N-terminus, the 682-residue chain is Potassium-transporting ATPase ATP-binding subunit (682 aa).

4 consecutive transmembrane segments (helical) span residues 34–54, 62–82, 219–239, and 254–274; these read PVMF…IAMA, ALFS…ANFA, IALT…TATL, and VLVA…LSAI. Asp307 acts as the 4-aspartylphosphate intermediate in catalysis. ATP-binding positions include Asp344, Glu348, 377-384, and Lys395; that span reads FTAQSRMS. Mg(2+)-binding residues include Asp518 and Asp522. A run of 3 helical transmembrane segments spans residues 588 to 608, 616 to 636, and 662 to 682; these read FAII…LNIM, AILS…PLAL, and LLVP…CGLV.

It belongs to the cation transport ATPase (P-type) (TC 3.A.3) family. Type IA subfamily. In terms of assembly, the system is composed of three essential subunits: KdpA, KdpB and KdpC.

The protein localises to the cell inner membrane. It catalyses the reaction K(+)(out) + ATP + H2O = K(+)(in) + ADP + phosphate + H(+). Functionally, part of the high-affinity ATP-driven potassium transport (or Kdp) system, which catalyzes the hydrolysis of ATP coupled with the electrogenic transport of potassium into the cytoplasm. This subunit is responsible for energy coupling to the transport system and for the release of the potassium ions to the cytoplasm. In Escherichia coli O81 (strain ED1a), this protein is Potassium-transporting ATPase ATP-binding subunit.